Reading from the N-terminus, the 361-residue chain is Ferredoxin--NADP reductase 1 (361 aa).

Positions 44, 52, 57, 97, 142, 308, and 349 each coordinate FAD.

The protein belongs to the ferredoxin--NADP reductase type 2 family. As to quaternary structure, homodimer. FAD is required as a cofactor.

It carries out the reaction 2 reduced [2Fe-2S]-[ferredoxin] + NADP(+) + H(+) = 2 oxidized [2Fe-2S]-[ferredoxin] + NADPH. This Cupriavidus necator (strain ATCC 17699 / DSM 428 / KCTC 22496 / NCIMB 10442 / H16 / Stanier 337) (Ralstonia eutropha) protein is Ferredoxin--NADP reductase 1.